The primary structure comprises 328 residues: Protein phosphatase 1 regulatory inhibitor subunit PPP1R7 homolog (328 aa).

LRR repeat units follow at residues Ile13 to Pro36, Pro37 to Leu59, Thr61 to His82, Leu86 to Lys110, Leu111 to Ala130, Ser131 to Leu153, His154 to Lys177, Glu179 to Leu196, Lys197 to Leu221, Glu223 to Leu240, Val241 to Lys264, Glu266 to Gly287, and Lys289 to Val312.

As to quaternary structure, interacts with human protein phosphatase PPP1C.

Its function is as follows. Inhibitor of protein-phosphatase 1 (PP1). Binds to and inhibits PP1 activity. This is Protein phosphatase 1 regulatory inhibitor subunit PPP1R7 homolog from Arabidopsis thaliana (Mouse-ear cress).